The primary structure comprises 124 residues: uncharacterized protein (124 aa).

3 consecutive transmembrane segments (helical) span residues 13-33 (LIQIVGVIFALFALSRVVLQL), 43-63 (GLFWIFVWGFVVIFLVFPEFF), and 71-91 (GVGRGVDALIYISIVVLFYLI).

The protein to M.thermoautotrophicum MTH137.

It localises to the cell membrane. This is an uncharacterized protein from Methanocaldococcus jannaschii (strain ATCC 43067 / DSM 2661 / JAL-1 / JCM 10045 / NBRC 100440) (Methanococcus jannaschii).